We begin with the raw amino-acid sequence, 270 residues long: Large ribosomal subunit protein bL21m (270 aa).

The N-terminal 68 residues, 1 to 68 (MASLRCFREL…HWYRSQDRCF (68 aa)), are a transit peptide targeting the mitochondrion. Residues 68-113 (FSSNTKDTDEDEESSEGEDDDEEEGEDFEDSADMEVEREYSPAEKV) form a disordered region. Residues 75-101 (TDEDEESSEGEDDDEEEGEDFEDSADM) show a composition bias toward acidic residues. A compositionally biased stretch (basic and acidic residues) spans 102–113 (EVEREYSPAEKV).

This sequence belongs to the bacterial ribosomal protein bL21 family. In terms of assembly, component of the mitochondrial ribosome large subunit. As to expression, constitutively expressed in roots, stems, leaves, flowers, pistils and siliques.

The protein resides in the mitochondrion. Functionally, this protein binds to 23S ribosomal RNA in the presence of protein L20. Required for karyogamy during female gametophyte development, when the two polar nuclei fuse to form the diploid central cell nucleus, and during double fertilization of the egg cell and the central cell. The protein is Large ribosomal subunit protein bL21m of Arabidopsis thaliana (Mouse-ear cress).